We begin with the raw amino-acid sequence, 549 residues long: Myotubularin-related protein 9 (549 aa).

Residue methionine 1 is modified to N-acetylmethionine. Residues alanine 4–leucine 99 form the GRAM domain. The region spanning glycine 123–phenylalanine 498 is the Myotubularin phosphatase domain. Positions leucine 508–glutamate 542 form a coiled coil. Serine 548 carries the post-translational modification Phosphoserine.

Belongs to the protein-tyrosine phosphatase family. Non-receptor class myotubularin subfamily. In terms of assembly, homodimer. Heterodimer (via C-terminus) with lipid phosphatase MTMR6 (via C-terminus). Heterodimer (via coiled coil domain) with lipid phosphatase MTMR7 (via C-terminus). Heterodimer with lipid phosphatase MTMR8.

The protein resides in the cytoplasm. The protein localises to the cell projection. It localises to the ruffle membrane. It is found in the perinuclear region. Its subcellular location is the endoplasmic reticulum. Its function is as follows. Acts as an adapter for myotubularin-related phosphatases. Increases lipid phosphatase MTMR6 catalytic activity, specifically towards phosphatidylinositol 3,5-bisphosphate, and MTMR6 binding affinity for phosphorylated phosphatidylinositols. Positively regulates lipid phosphatase MTMR7 catalytic activity. Increases MTMR8 catalytic activity towards phosphatidylinositol 3-phosphate. The formation of the MTMR6-MTMR9 complex, stabilizes both MTMR6 and MTMR9 protein levels. Stabilizes MTMR8 protein levels. Plays a role in the late stages of macropinocytosis possibly by regulating MTMR6-mediated dephosphorylation of phosphatidylinositol 3-phosphate in membrane ruffles. Negatively regulates autophagy, in part via its association with MTMR8. Negatively regulates DNA damage-induced apoptosis, in part via its association with MTMR6. Does not bind mono-, di- and tri-phosphorylated phosphatidylinositols, phosphatidic acid and phosphatidylserine. This chain is Myotubularin-related protein 9 (MTMR9), found in Bos taurus (Bovine).